The sequence spans 86 residues: Small ribosomal subunit protein bS18 (86 aa).

Belongs to the bacterial ribosomal protein bS18 family. In terms of assembly, part of the 30S ribosomal subunit. Forms a tight heterodimer with protein bS6.

Functionally, binds as a heterodimer with protein bS6 to the central domain of the 16S rRNA, where it helps stabilize the platform of the 30S subunit. The polypeptide is Small ribosomal subunit protein bS18 (Heliobacterium modesticaldum (strain ATCC 51547 / Ice1)).